The primary structure comprises 68 residues: 1-carboxybiuret hydrolase subunit AtzG (68 aa).

Heterotetramer consisting of 2 AtzE and 2 AtzG subunits.

It functions in the pathway xenobiotic degradation; atrazine degradation. Its function is as follows. Important for the activity of the AtzE subunit of 1-carboxybiuret hydrolase. The chain is 1-carboxybiuret hydrolase subunit AtzG from Pseudomonas sp. (strain ADP).